A 122-amino-acid chain; its full sequence is Large ribosomal subunit protein uL14 (122 aa).

Belongs to the universal ribosomal protein uL14 family. As to quaternary structure, part of the 50S ribosomal subunit. Forms a cluster with proteins L3 and L19. In the 70S ribosome, L14 and L19 interact and together make contacts with the 16S rRNA in bridges B5 and B8.

In terms of biological role, binds to 23S rRNA. Forms part of two intersubunit bridges in the 70S ribosome. This is Large ribosomal subunit protein uL14 from Carsonella ruddii (strain PV).